A 205-amino-acid chain; its full sequence is uncharacterized protein (205 aa).

This is an uncharacterized protein from Orgyia pseudotsugata (Douglas-fir tussock moth).